Here is a 366-residue protein sequence, read N- to C-terminus: 1-deoxy-D-xylulose 5-phosphate reductoisomerase (366 aa).

Residues T7, G8, S9, I10, G31, K32, N33, and N113 each contribute to the NADPH site. Position 114 (K114) interacts with 1-deoxy-D-xylulose 5-phosphate. E115 serves as a coordination point for NADPH. Position 133 (D133) interacts with Mn(2+). Positions 134, 135, 158, and 181 each coordinate 1-deoxy-D-xylulose 5-phosphate. Residue E135 participates in Mn(2+) binding. An NADPH-binding site is contributed by G187. 1-deoxy-D-xylulose 5-phosphate is bound by residues S194, N199, K200, and E203. A Mn(2+)-binding site is contributed by E203.

Belongs to the DXR family. The cofactor is Mg(2+). Mn(2+) serves as cofactor.

The enzyme catalyses 2-C-methyl-D-erythritol 4-phosphate + NADP(+) = 1-deoxy-D-xylulose 5-phosphate + NADPH + H(+). It functions in the pathway isoprenoid biosynthesis; isopentenyl diphosphate biosynthesis via DXP pathway; isopentenyl diphosphate from 1-deoxy-D-xylulose 5-phosphate: step 1/6. Its function is as follows. Catalyzes the NADPH-dependent rearrangement and reduction of 1-deoxy-D-xylulose-5-phosphate (DXP) to 2-C-methyl-D-erythritol 4-phosphate (MEP). The sequence is that of 1-deoxy-D-xylulose 5-phosphate reductoisomerase from Helicobacter pylori (strain G27).